Consider the following 240-residue polypeptide: Transcription factor bHLH101 (240 aa).

Positions 65–117 constitute a bHLH domain; the sequence is EKKLNHNASERDRRRKLNALYSSLRALLPLSDQKRKLSIPMTVARVVKYIPEQ.

Homodimer. In terms of tissue distribution, flowers.

Its subcellular location is the nucleus. This chain is Transcription factor bHLH101 (BHLH101), found in Arabidopsis thaliana (Mouse-ear cress).